The chain runs to 115 residues: Ribonuclease P protein component (115 aa).

The protein belongs to the RnpA family. In terms of assembly, consists of a catalytic RNA component (M1 or rnpB) and a protein subunit.

It catalyses the reaction Endonucleolytic cleavage of RNA, removing 5'-extranucleotides from tRNA precursor.. RNaseP catalyzes the removal of the 5'-leader sequence from pre-tRNA to produce the mature 5'-terminus. It can also cleave other RNA substrates such as 4.5S RNA. The protein component plays an auxiliary but essential role in vivo by binding to the 5'-leader sequence and broadening the substrate specificity of the ribozyme. This chain is Ribonuclease P protein component, found in Blochmanniella pennsylvanica (strain BPEN).